The sequence spans 50 residues: Sperm protamine P1 (50 aa).

Disulfide bonds link Cys-7–Cys-15 and Cys-38–Cys-46.

Belongs to the protamine P1 family. Cross-linked by interchain disulfide bonds around the DNA-helix. As to expression, testis.

Its subcellular location is the nucleus. It is found in the chromosome. Its function is as follows. Protamines substitute for histones in the chromatin of sperm during the haploid phase of spermatogenesis. They compact sperm DNA into a highly condensed, stable and inactive complex. The polypeptide is Sperm protamine P1 (PRM1) (Equus caballus (Horse)).